Reading from the N-terminus, the 182-residue chain is Ferredoxin-thioredoxin reductase subunit A1, chloroplastic (182 aa).

The N-terminal 81 residues, 1–81 (MSSQIALSPA…VAIKSADSIN (81 aa)), are a transit peptide targeting the chloroplast.

This sequence belongs to the ferredoxin thioredoxin reductase alpha subunit family. In terms of assembly, heterodimer of subunit A (variable subunit) and subunit B (catalytic subunit). Heterodimeric FTR forms a complex with ferredoxin and thioredoxin.

It localises to the plastid. The protein localises to the chloroplast. Functionally, variable subunit of the ferredoxin-thioredoxin reductase (FTR), which catalyzes the two-electron reduction of thioredoxins by the electrons provided by reduced ferredoxin. This is Ferredoxin-thioredoxin reductase subunit A1, chloroplastic from Arabidopsis thaliana (Mouse-ear cress).